Reading from the N-terminus, the 52-residue chain is Alpha-crystallin B chain (52 aa).

It belongs to the small heat shock protein (HSP20) family. Homodimer. Aggregates with homologous proteins, including alpha-A-crystallin and the small heat shock protein HSPB1, to form large heteromeric complexes.

In terms of biological role, may contribute to the transparency and refractive index of the lens. In Eudromia elegans (Elegant crested-tinamou), this protein is Alpha-crystallin B chain (CRYAB).